We begin with the raw amino-acid sequence, 297 residues long: Probable DNA polymerase III subunit delta (297 aa).

This sequence belongs to the DNA polymerase HolA subunit family. Component of the DNA clamp loading complex consisting of tau(3):delta(1):delta'(1). The DNA polymerase III holoenzyme complex contains at least 10 different subunits organized into 3 functionally essential subassemblies: the Pol III core, the beta sliding clamp processivity factor and the clamp-loading complex. The Pol III core (subunits alpha, epsilon and theta) contains the polymerase and the 3'-5' exonuclease proofreading activities. The polymerase is tethered to the template via the dimeric beta sliding clamp processivity factor. The DNA clamp-loading complex assembles the beta sliding clamp onto the primed template and plays a central role in the organization and communication at the replication fork.

The catalysed reaction is DNA(n) + a 2'-deoxyribonucleoside 5'-triphosphate = DNA(n+1) + diphosphate. Part of the beta sliding clamp loading complex, which hydrolyzes ATP to load the beta clamp onto primed DNA to form the DNA replication pre-initiation complex. DNA polymerase III is a complex, multichain enzyme responsible for most of the replicative synthesis in bacteria. This DNA polymerase also exhibits 3'-5' exonuclease activity. The delta subunit is the wrench that will open the beta subunit dimer. The DNA clamp loading complex (tau(3),delta,delta') is thought to load beta dimers onto DNA by binding ATP which alters the complex's conformation so it can bind beta sliding clamp dimers and open them at one interface. Primed DNA is recognized, ATP is hydrolyzed releasing the clamp loading complex and closing the beta sliding clamp ring around the primed DNA. The protein is Probable DNA polymerase III subunit delta of Mycoplasma genitalium (strain ATCC 33530 / DSM 19775 / NCTC 10195 / G37) (Mycoplasmoides genitalium).